A 615-amino-acid polypeptide reads, in one-letter code: DNA mismatch repair protein MutL (615 aa).

Residues Phe-363–Tyr-397 form a disordered region. A compositionally biased stretch (low complexity) spans Ala-364–Pro-391.

This sequence belongs to the DNA mismatch repair MutL/HexB family.

Functionally, this protein is involved in the repair of mismatches in DNA. It is required for dam-dependent methyl-directed DNA mismatch repair. May act as a 'molecular matchmaker', a protein that promotes the formation of a stable complex between two or more DNA-binding proteins in an ATP-dependent manner without itself being part of a final effector complex. The sequence is that of DNA mismatch repair protein MutL from Escherichia coli O9:H4 (strain HS).